The sequence spans 254 residues: Thiazole synthase (254 aa).

The active-site Schiff-base intermediate with DXP is Lys96. 1-deoxy-D-xylulose 5-phosphate is bound by residues Gly157, 183 to 184 (AG), and 205 to 206 (NT).

It belongs to the ThiG family. As to quaternary structure, homotetramer. Forms heterodimers with either ThiH or ThiS.

It is found in the cytoplasm. The enzyme catalyses [ThiS sulfur-carrier protein]-C-terminal-Gly-aminoethanethioate + 2-iminoacetate + 1-deoxy-D-xylulose 5-phosphate = [ThiS sulfur-carrier protein]-C-terminal Gly-Gly + 2-[(2R,5Z)-2-carboxy-4-methylthiazol-5(2H)-ylidene]ethyl phosphate + 2 H2O + H(+). It participates in cofactor biosynthesis; thiamine diphosphate biosynthesis. Its function is as follows. Catalyzes the rearrangement of 1-deoxy-D-xylulose 5-phosphate (DXP) to produce the thiazole phosphate moiety of thiamine. Sulfur is provided by the thiocarboxylate moiety of the carrier protein ThiS. In vitro, sulfur can be provided by H(2)S. This is Thiazole synthase from Clostridium perfringens (strain 13 / Type A).